We begin with the raw amino-acid sequence, 542 residues long: Peptide chain release factor 3 (542 aa).

Positions 11–279 constitute a tr-type G domain; that stretch reads EKRRTFAIIS…AYVEYAPSPR (269 aa). GTP is bound by residues 20-27, 88-92, and 142-145; these read SHPDAGKT, DTPGH, and NKLD.

Belongs to the TRAFAC class translation factor GTPase superfamily. Classic translation factor GTPase family. PrfC subfamily.

The protein localises to the cytoplasm. In terms of biological role, increases the formation of ribosomal termination complexes and stimulates activities of RF-1 and RF-2. It binds guanine nucleotides and has strong preference for UGA stop codons. It may interact directly with the ribosome. The stimulation of RF-1 and RF-2 is significantly reduced by GTP and GDP, but not by GMP. In Nitrosococcus oceani (strain ATCC 19707 / BCRC 17464 / JCM 30415 / NCIMB 11848 / C-107), this protein is Peptide chain release factor 3.